We begin with the raw amino-acid sequence, 1191 residues long: Protogenin (1191 aa).

A signal peptide spans 1–23 (MAPPVRPGMLPLLLLLLLPPLGS). Ig-like domains follow at residues 24–124 (VPGV…AHLT), 126–216 (STIS…ASLT), 229–316 (PTII…ATLT), and 321–405 (PSFV…ARLT). Over 24–943 (VPGVWSFSEL…YYHLDQKSMT (920 aa)) the chain is Extracellular. Disulfide bonds link C54–C107 and C150–C199. An N-linked (GlcNAc...) asparagine glycan is attached at N237. 2 cysteine pairs are disulfide-bonded: C250–C298 and C342–C389. Fibronectin type-III domains follow at residues 415 to 509 (APYN…TLED), 511 to 607 (PLRP…TPKA), 612 to 711 (APKS…VRDR), 718 to 811 (PPHH…TLPE), and 816 to 911 (PPVG…VLPK). Residue N624 is glycosylated (N-linked (GlcNAc...) asparagine). Residues 944–964 (GIAVGVGIALTCILICVLILI) traverse the membrane as a helical segment. The Cytoplasmic portion of the chain corresponds to 965–1191 (YRSKARKSSA…LRYAAEGFPV (227 aa)). 2 disordered regions span residues 975–1010 (SKTA…ETAE) and 1079–1191 (ISDE…GFPV). Residues 977 to 990 (TAQSGTQPLSQASA) show a composition bias toward polar residues. Residues 1104–1132 (DTEHSANSEGSHETGDSGRFSHESNDEIH) show a composition bias toward basic and acidic residues. Polar residues-rich tracts occupy residues 1135–1146 (SVISSTPPTSNP) and 1171–1180 (EQTSAPQTSA).

This sequence belongs to the immunoglobulin superfamily. DCC family. In terms of tissue distribution, from mid-gastrulation to early somite stages, restricted to posterior neural plate and mesoderm with an anterior limit at the level of the rhombencephalon. Posterior restriction is progressively lost during somitogenesis. Expression is maintained in the neural tube and paraxial mesoderm during this process. As development proceeds, further restricted to the dorsal parts of the spinal cord and somites. In parallel, expression progresses caudally during axis elongation.

Its subcellular location is the membrane. Functionally, may play a role in anteroposterior axis elongation. This is Protogenin from Mus musculus (Mouse).